The primary structure comprises 297 residues: Phosphoribosylaminoimidazole-succinocarboxamide synthase (297 aa).

It belongs to the SAICAR synthetase family.

It catalyses the reaction 5-amino-1-(5-phospho-D-ribosyl)imidazole-4-carboxylate + L-aspartate + ATP = (2S)-2-[5-amino-1-(5-phospho-beta-D-ribosyl)imidazole-4-carboxamido]succinate + ADP + phosphate + 2 H(+). It functions in the pathway purine metabolism; IMP biosynthesis via de novo pathway; 5-amino-1-(5-phospho-D-ribosyl)imidazole-4-carboxamide from 5-amino-1-(5-phospho-D-ribosyl)imidazole-4-carboxylate: step 1/2. The chain is Phosphoribosylaminoimidazole-succinocarboxamide synthase from Mycobacteroides abscessus (strain ATCC 19977 / DSM 44196 / CCUG 20993 / CIP 104536 / JCM 13569 / NCTC 13031 / TMC 1543 / L948) (Mycobacterium abscessus).